Consider the following 227-residue polypeptide: Eukaryotic translation initiation factor 4E-1 (227 aa).

The disordered stretch occupies residues 1 to 52 (MAEEHETRPPSAGRPPSSGRGRADDADEREEGEIADDDSGHAPPQANPAAPH). Over residues 9–20 (PPSAGRPPSSGR) the composition is skewed to low complexity. Residues 25-37 (DADEREEGEIADD) are compositionally biased toward acidic residues. EIF4G-binding stretches follow at residues 52–55 (HPLE) and 62–98 (FDNPQGKSKQATWGSSIRPIHTFSTVEDFWSLYNNIH). Residues 70–75 (KQATWG), K102, and 120–121 (WE) contribute to the mRNA site. Cysteines 125 and 163 form a disulfide. Positions 146-155 (HTLLAMIGEQ) are EIF4G-binding. Residues 170–175 (RGKQER) and 215–219 (KKMDK) contribute to the mRNA site.

It belongs to the eukaryotic initiation factor 4E family. In terms of assembly, EIF4F is a multi-subunit complex, the composition of which varies with external and internal environmental conditions. It is composed of at least EIF4A, EIF4E and EIF4G. EIF4E is also known to interact with other partners. In higher plants two isoforms of EIF4F have been identified, named isoform EIF4F and isoform EIF(iso)4F. Isoform EIF4F has subunits p220 and p26, whereas isoform EIF(iso)4F has subunits p82 and p28. Post-translationally, according to the redox status, the Cys-125-Cys-163 disulfide bridge may have a role in regulating protein function by affecting its ability to bind capped mRNA.

The protein resides in the nucleus. It localises to the cytoplasm. In terms of biological role, component of the protein complex eIF4F, which is involved in the recognition of the mRNA cap, ATP-dependent unwinding of 5'-terminal secondary structure and recruitment of mRNA to the ribosome. Recognizes and binds the 7-methylguanosine-containing mRNA cap during an early step in the initiation of protein synthesis and facilitates ribosome binding by inducing the unwinding of the mRNAs secondary structures. In Oryza sativa subsp. japonica (Rice), this protein is Eukaryotic translation initiation factor 4E-1.